Reading from the N-terminus, the 506-residue chain is Histidine ammonia-lyase (506 aa).

A cross-link (5-imidazolinone (Ala-Gly)) is located at residues 143-145 (ASG). Ser144 is modified (2,3-didehydroalanine (Ser)).

This sequence belongs to the PAL/histidase family. Post-translationally, contains an active site 4-methylidene-imidazol-5-one (MIO), which is formed autocatalytically by cyclization and dehydration of residues Ala-Ser-Gly.

The protein localises to the cytoplasm. It carries out the reaction L-histidine = trans-urocanate + NH4(+). It functions in the pathway amino-acid degradation; L-histidine degradation into L-glutamate; N-formimidoyl-L-glutamate from L-histidine: step 1/3. The chain is Histidine ammonia-lyase from Salmonella arizonae (strain ATCC BAA-731 / CDC346-86 / RSK2980).